The following is a 506-amino-acid chain: MKQILFMDTTLRDGEQSPGVNLNEQEKLQIARQLEKLGIDVMEAGFAAASEGDFQSVKRIAESIQNASVMSLARAKESDIRKAYEAVKRAVSPRLHVFLATSDIHMKYKLCMSKEDVLDSIHRSVILGKSLFPTVQFSAEDATRTAQPFLAEAVEVAIRAGADVINIPDTVGYTHPEEYYSLFQYLQESVPSYEKAIFSCHCHDDLGMAVANSLAAIEGGALQVEGTINGIGERAGNAALEEVAVALHIRKDHYKTQSSIILKEIKATSTLVSRLTGMMIPKNKAIVGANAFAHESGIHQDGVLKEVTTYEIIAPELIGESQNLFVLGKHSGRHAFTERMKELGYELTQKERDAAFEAFKALADRKKEITDEDLRALMLGEAALLTQQYNIKQLQVHFVSNHIQCATVVLQDGKGNKYEDAATGAGSIEAIYHAIQRILEMECKLVDYRIQSITQGQDALAHVHVELKEGPHQVSGFGVAQDVLEASARAYVHAAGKLKALLTLVK.

The Pyruvate carboxyltransferase domain maps to 4–266 (ILFMDTTLRD…QSSIILKEIK (263 aa)). Residues aspartate 13, histidine 201, histidine 203, and asparagine 237 each coordinate Mn(2+). The segment at 390-506 (NIKQLQVHFV…KLKALLTLVK (117 aa)) is regulatory domain.

This sequence belongs to the alpha-IPM synthase/homocitrate synthase family. LeuA type 1 subfamily. In terms of assembly, homodimer. Mn(2+) serves as cofactor.

The protein localises to the cytoplasm. The enzyme catalyses 3-methyl-2-oxobutanoate + acetyl-CoA + H2O = (2S)-2-isopropylmalate + CoA + H(+). The protein operates within amino-acid biosynthesis; L-leucine biosynthesis; L-leucine from 3-methyl-2-oxobutanoate: step 1/4. Catalyzes the condensation of the acetyl group of acetyl-CoA with 3-methyl-2-oxobutanoate (2-ketoisovalerate) to form 3-carboxy-3-hydroxy-4-methylpentanoate (2-isopropylmalate). The polypeptide is 2-isopropylmalate synthase (Bacillus cytotoxicus (strain DSM 22905 / CIP 110041 / 391-98 / NVH 391-98)).